Here is a 1352-residue protein sequence, read N- to C-terminus: Ubiquitin carboxyl-terminal hydrolase 31 (1352 aa).

Low complexity predominate over residues 1 to 16 (MSKVTAPGSGPPAAAS). Disordered regions lie at residues 1-62 (MSKV…RSVG) and 79-119 (SSEG…PPAC). The span at 32–43 (RAGGGGAGGPGA) shows a compositional bias: gly residues. Positions 44-62 (SGPAAPSSPSSPSSARSVG) are enriched in low complexity. Residues 95 to 117 (PPGPAAAPTPPPCPPPPASPAPP) show a composition bias toward pro residues. The USP domain maps to 128–765 (AGLRNHGNTC…TAYILFYQRR (638 aa)). Cys-137 (nucleophile) is an active-site residue. The interval 162-185 (RAGRPEPSPDPEQPAGRGAQGQGE) is disordered. The active-site Proton acceptor is His-723. Disordered stretches follow at residues 812 to 835 (LASL…FSTR), 919 to 939 (SSSY…AVGR), and 951 to 1352 (DESD…QKPQ). Residues 958–970 (LNSSVVDTQSKHS) show a composition bias toward polar residues. Composition is skewed to low complexity over residues 992-1001 (VDQSDSVDSS), 1051-1070 (SSLS…SLKP), 1078-1089 (DSSSRGSGRHSS), and 1101-1138 (PKSQ…GPAT). The segment covering 1148–1159 (RTSDHSLSREGS) has biased composition (basic and acidic residues). Residues 1160 to 1181 (RQSLGSDRASATSTSKPNSPRV) show a composition bias toward polar residues. Low complexity predominate over residues 1198-1210 (SSSMASLRSPSTS). 2 stretches are compositionally biased toward basic and acidic residues: residues 1215–1225 (LKRDSKSEDKG) and 1234–1243 (RQKETRRSTD). The segment covering 1251–1264 (SKKAGGSSVKSVCK) has biased composition (low complexity). Residue Lys-1264 is modified to N6-acetyllysine. Polar residues-rich tracts occupy residues 1278–1290 (PASQ…TTGK) and 1341–1352 (MQTSARPSQKPQ).

This sequence belongs to the peptidase C19 family. Acetylated at Lys-1264. Acetylation decreases activity. Deacetylated by SIRT1. In terms of tissue distribution, widely expressed.

It carries out the reaction Thiol-dependent hydrolysis of ester, thioester, amide, peptide and isopeptide bonds formed by the C-terminal Gly of ubiquitin (a 76-residue protein attached to proteins as an intracellular targeting signal).. In terms of biological role, deubiquitinase that recognizes and hydrolyzes the peptide bond at the C-terminal Gly of ubiquitin. May play a role in the regulation of NF-kappa-B signaling pathway by deubiquitinating TRAF2. Its function is as follows. (Microbial infection) Plays a positive role in foot-and-mouth disease and classical swine fever viral infection. Mechanistically, associates with internal ribosomal entry site (IRES) element within the 5'-untranslated region of viral genomes to promote translation of the virus-encoded polyprotein. The chain is Ubiquitin carboxyl-terminal hydrolase 31 (USP31) from Homo sapiens (Human).